Consider the following 174-residue polypeptide: Larval cuticle protein A1A (174 aa).

2 repeat units span residues 45-48 (AAPV) and 67-70 (AAPV). One can recognise a Chitin-binding type R&amp;R domain in the interval 84-150 (NPQYSFGYDV…AVVHREPLVA (67 aa)). Repeat 3 spans residues 155–158 (AAPA).

Functionally, component of the cuticle of the larva of Tenebrio molitor. This is Larval cuticle protein A1A from Tenebrio molitor (Yellow mealworm beetle).